A 180-amino-acid chain; its full sequence is uncharacterized protein (180 aa).

The first 30 residues, 1-30 (MRHKIITFILAVVVIIIIGNMIGGGGGSEA), serve as a signal peptide directing secretion. Positions 25–46 (GGGSEATSKTSSSSKAETEKTY) are disordered. Residues 29–39 (EATSKTSSSSK) show a composition bias toward low complexity.

The protein localises to the secreted. This is an uncharacterized protein from Bacillus subtilis (strain 168).